Consider the following 209-residue polypeptide: Outer-membrane lipoprotein LolB (209 aa).

The N-terminal stretch at 1–21 is a signal peptide; sequence MNNMKTFKFLTALFATAILTA. C22 carries the N-palmitoyl cysteine lipid modification. The S-diacylglycerol cysteine moiety is linked to residue C22.

Belongs to the LolB family. Monomer.

The protein resides in the cell outer membrane. Plays a critical role in the incorporation of lipoproteins in the outer membrane after they are released by the LolA protein. In Haemophilus influenzae (strain 86-028NP), this protein is Outer-membrane lipoprotein LolB.